The following is a 379-amino-acid chain: Anhydro-N-acetylmuramic acid kinase (379 aa).

Glycine 9 to aspartate 16 lines the ATP pocket.

The protein belongs to the anhydro-N-acetylmuramic acid kinase family.

It catalyses the reaction 1,6-anhydro-N-acetyl-beta-muramate + ATP + H2O = N-acetyl-D-muramate 6-phosphate + ADP + H(+). It functions in the pathway amino-sugar metabolism; 1,6-anhydro-N-acetylmuramate degradation. It participates in cell wall biogenesis; peptidoglycan recycling. Its function is as follows. Catalyzes the specific phosphorylation of 1,6-anhydro-N-acetylmuramic acid (anhMurNAc) with the simultaneous cleavage of the 1,6-anhydro ring, generating MurNAc-6-P. Is required for the utilization of anhMurNAc either imported from the medium or derived from its own cell wall murein, and thus plays a role in cell wall recycling. The protein is Anhydro-N-acetylmuramic acid kinase of Prochlorococcus marinus (strain MIT 9303).